Here is a 662-residue protein sequence, read N- to C-terminus: Probable protein phosphatase CG10417 (662 aa).

A PPM-type phosphatase domain is found at 23-564 (AVGASSMQGW…DNMTAVIVQF (542 aa)). 2 residues coordinate Mn(2+): aspartate 57 and glycine 58. 2 disordered regions span residues 219 to 275 (DGVA…FKHT) and 288 to 374 (GSND…DEDQ). Polar residues-rich tracts occupy residues 238 to 252 (DSNTTTSINDLSTKN), 261 to 275 (NDQNEGSNGTDFKHT), and 288 to 319 (GSNDMTELNQSSKNEFTNSSTSKEFERNINSS). Phosphoserine occurs at positions 289 and 306. Positions 320–334 (QDDEFTDDDADYEEN) are enriched in acidic residues. A compositionally biased stretch (polar residues) spans 337–347 (VKSPDTSSAES). Residues 349 to 374 (DCTENDDDGDEDGNEDSDEEETDEDQ) are compositionally biased toward acidic residues. Residues aspartate 506 and aspartate 555 each coordinate Mn(2+). Residues 591–609 (VSHSLNDQSASKRCASQNA) show a composition bias toward polar residues. The disordered stretch occupies residues 591 to 662 (VSHSLNDQSA…KEVTIIVSSS (72 aa)). A phosphoserine mark is found at serine 592, serine 594, and serine 599. The segment covering 616–637 (LEKNNSKRLKTDLEQENIKDRT) has biased composition (basic and acidic residues). Threonine 637 is modified (phosphothreonine). 2 positions are modified to phosphoserine: serine 639 and serine 641.

Belongs to the PP2C family. Requires Mg(2+) as cofactor. It depends on Mn(2+) as a cofactor.

It carries out the reaction O-phospho-L-seryl-[protein] + H2O = L-seryl-[protein] + phosphate. The enzyme catalyses O-phospho-L-threonyl-[protein] + H2O = L-threonyl-[protein] + phosphate. In Drosophila melanogaster (Fruit fly), this protein is Probable protein phosphatase CG10417.